The chain runs to 443 residues: Phosphomevalonate kinase ERG8 (443 aa).

160–170 (ANKTGLGSSAA) contributes to the ATP binding site.

The protein belongs to the GHMP kinase family. Mevalonate kinase subfamily.

It carries out the reaction (R)-5-phosphomevalonate + ATP = (R)-5-diphosphomevalonate + ADP. The protein operates within isoprenoid biosynthesis; isopentenyl diphosphate biosynthesis via mevalonate pathway; isopentenyl diphosphate from (R)-mevalonate: step 2/3. Phosphomevalonate kinase; part of the second module of ergosterol biosynthesis pathway that includes the middle steps of the pathway. ERG8 converts 5-phosphomevalonate to 5-diphosphomevalonate. The second module is carried out in the vacuole and involves the formation of farnesyl diphosphate, which is also an important intermediate in the biosynthesis of ubiquinone, dolichol, heme and prenylated proteins. Activity by the mevalonate kinase ERG12 (FG05912) first converts mevalonate into 5-phosphomevalonate. 5-phosphomevalonate is then further converted to 5-diphosphomevalonate by the phosphomevalonate kinase ERG8 (FG09764). The diphosphomevalonate decarboxylase ERG19 (FG10424) then produces isopentenyl diphosphate. The isopentenyl-diphosphate delta-isomerase IDI1 (FG09722) then catalyzes the 1,3-allylic rearrangement of the homoallylic substrate isopentenyl (IPP) to its highly electrophilic allylic isomer, dimethylallyl diphosphate (DMAPP). Finally the farnesyl diphosphate synthase ERG20 (FG06784) catalyzes the sequential condensation of isopentenyl pyrophosphate with dimethylallyl pyrophosphate, and then with the resultant geranylpyrophosphate to the ultimate product farnesyl pyrophosphate. This chain is Phosphomevalonate kinase ERG8, found in Gibberella zeae (strain ATCC MYA-4620 / CBS 123657 / FGSC 9075 / NRRL 31084 / PH-1) (Wheat head blight fungus).